Reading from the N-terminus, the 358-residue chain is Chorismate synthase (358 aa).

R47 lines the NADP(+) pocket. Residues 124–126 (RSS), 240–241 (NA), G284, 299–303 (KPVAT), and R325 each bind FMN.

This sequence belongs to the chorismate synthase family. As to quaternary structure, homotetramer. The cofactor is FMNH2.

The catalysed reaction is 5-O-(1-carboxyvinyl)-3-phosphoshikimate = chorismate + phosphate. It participates in metabolic intermediate biosynthesis; chorismate biosynthesis; chorismate from D-erythrose 4-phosphate and phosphoenolpyruvate: step 7/7. Catalyzes the anti-1,4-elimination of the C-3 phosphate and the C-6 proR hydrogen from 5-enolpyruvylshikimate-3-phosphate (EPSP) to yield chorismate, which is the branch point compound that serves as the starting substrate for the three terminal pathways of aromatic amino acid biosynthesis. This reaction introduces a second double bond into the aromatic ring system. In Bacteroides fragilis (strain YCH46), this protein is Chorismate synthase.